The chain runs to 563 residues: Arginine--tRNA ligase (563 aa).

The 'HIGH' region motif lies at 120 to 130 (PNIAKPFHVGH).

This sequence belongs to the class-I aminoacyl-tRNA synthetase family. In terms of assembly, monomer.

It localises to the cytoplasm. The enzyme catalyses tRNA(Arg) + L-arginine + ATP = L-arginyl-tRNA(Arg) + AMP + diphosphate. The protein is Arginine--tRNA ligase of Clostridium botulinum (strain Alaska E43 / Type E3).